Reading from the N-terminus, the 212-residue chain is Interleukin-6 (212 aa).

The N-terminal stretch at methionine 1 to proline 29 is a signal peptide. A disulfide bridge connects residues cysteine 72 and cysteine 78. Phosphoserine is present on serine 81. Cysteine 101 and cysteine 111 form a disulfide bridge. Residues glutamine 156–leucine 175 form a disordered region. A compositionally biased stretch (polar residues) spans lysine 163–leucine 175.

The protein belongs to the IL-6 superfamily. In terms of assembly, component of a hexamer of two molecules each of IL6, IL6R and IL6ST; first binds to IL6R to associate with the signaling subunit IL6ST. Interacts with IL6R (via the N-terminal ectodomain); this interaction may be affected by IL6R-binding with SORL1, hence decreasing IL6 cis signaling. Interacts with SORL1 (via the N-terminal ectodomain); this interaction leads to IL6 internalization and lysosomal degradation. May form a trimeric complex with the soluble SORL1 ectodomain and soluble IL6R receptor; this interaction might stabilize circulating IL6, hence promoting IL6 trans signaling.

Its subcellular location is the secreted. Cytokine with a wide variety of biological functions in immunity, tissue regeneration, and metabolism. Binds to IL6R, then the complex associates to the signaling subunit IL6ST/gp130 to trigger the intracellular IL6-signaling pathway. The interaction with the membrane-bound IL6R and IL6ST stimulates 'classic signaling', whereas the binding of IL6 and soluble IL6R to IL6ST stimulates 'trans-signaling'. Alternatively, 'cluster signaling' occurs when membrane-bound IL6:IL6R complexes on transmitter cells activate IL6ST receptors on neighboring receiver cells. Its function is as follows. IL6 is a potent inducer of the acute phase response. Rapid production of IL6 contributes to host defense during infection and tissue injury, but excessive IL6 synthesis is involved in disease pathology. In the innate immune response, is synthesized by myeloid cells, such as macrophages and dendritic cells, upon recognition of pathogens through toll-like receptors (TLRs) at the site of infection or tissue injury. In the adaptive immune response, is required for the differentiation of B cells into immunoglobulin-secreting cells. Plays a major role in the differentiation of CD4(+) T cell subsets. Essential factor for the development of T follicular helper (Tfh) cells that are required for the induction of germinal-center formation. Required to drive naive CD4(+) T cells to the Th17 lineage. Also required for proliferation of myeloma cells and the survival of plasmablast cells. In terms of biological role, acts as an essential factor in bone homeostasis and on vessels directly or indirectly by induction of VEGF, resulting in increased angiogenesis activity and vascular permeability. Induces, through 'trans-signaling' and synergistically with IL1B and TNF, the production of VEGF. Involved in metabolic controls, is discharged into the bloodstream after muscle contraction increasing lipolysis and improving insulin resistance. 'Trans-signaling' in central nervous system also regulates energy and glucose homeostasis. Mediates, through GLP-1, crosstalk between insulin-sensitive tissues, intestinal L cells and pancreatic islets to adapt to changes in insulin demand. Also acts as a myokine. Plays a protective role during liver injury, being required for maintenance of tissue regeneration. Also has a pivotal role in iron metabolism by regulating HAMP/hepcidin expression upon inflammation or bacterial infection. Through activation of IL6ST-YAP-NOTCH pathway, induces inflammation-induced epithelial regeneration. This is Interleukin-6 (IL6) from Sus scrofa (Pig).